The primary structure comprises 262 residues: Phosphatase SCO2771 (262 aa).

Displays phosphatase activity against p-nitrophenyl phosphate (pNPP) in vitro; however, the physiological substrate is unknown. In Streptomyces coelicolor (strain ATCC BAA-471 / A3(2) / M145), this protein is Phosphatase SCO2771.